Reading from the N-terminus, the 209-residue chain is Uracil phosphoribosyltransferase (209 aa).

5-phospho-alpha-D-ribose 1-diphosphate is bound by residues Arg-79, Arg-104, and 131–139 (DPMLATGNS). Residues Ile-194 and 199–201 (GDA) each bind uracil. Asp-200 is a binding site for 5-phospho-alpha-D-ribose 1-diphosphate.

Belongs to the UPRTase family. The cofactor is Mg(2+).

The catalysed reaction is UMP + diphosphate = 5-phospho-alpha-D-ribose 1-diphosphate + uracil. It functions in the pathway pyrimidine metabolism; UMP biosynthesis via salvage pathway; UMP from uracil: step 1/1. With respect to regulation, allosterically activated by GTP. Its function is as follows. Catalyzes the conversion of uracil and 5-phospho-alpha-D-ribose 1-diphosphate (PRPP) to UMP and diphosphate. The protein is Uracil phosphoribosyltransferase of Delftia acidovorans (strain DSM 14801 / SPH-1).